The primary structure comprises 377 residues: 3-dehydroquinate synthase (377 aa).

NAD(+) contacts are provided by residues G115 to D119, T139 to S140, K152, and K161. Residues E194, H256, and H275 each contribute to the Zn(2+) site.

It belongs to the sugar phosphate cyclases superfamily. Dehydroquinate synthase family. Co(2+) is required as a cofactor. Zn(2+) serves as cofactor. It depends on NAD(+) as a cofactor.

It localises to the cytoplasm. The enzyme catalyses 7-phospho-2-dehydro-3-deoxy-D-arabino-heptonate = 3-dehydroquinate + phosphate. It functions in the pathway metabolic intermediate biosynthesis; chorismate biosynthesis; chorismate from D-erythrose 4-phosphate and phosphoenolpyruvate: step 2/7. Catalyzes the conversion of 3-deoxy-D-arabino-heptulosonate 7-phosphate (DAHP) to dehydroquinate (DHQ). This Rhizobium rhizogenes (strain K84 / ATCC BAA-868) (Agrobacterium radiobacter) protein is 3-dehydroquinate synthase.